The chain runs to 261 residues: uncharacterized protein (261 aa).

This is an uncharacterized protein from Bacillus subtilis (strain 168).